Here is a 117-residue protein sequence, read N- to C-terminus: Pre-mRNA-splicing factor ini1 (117 aa).

It belongs to the PHF5 family.

The protein localises to the nucleus. Its function is as follows. Required for pre-mRNA splicing. The protein is Pre-mRNA-splicing factor ini1 (ini1) of Schizosaccharomyces pombe (strain 972 / ATCC 24843) (Fission yeast).